Reading from the N-terminus, the 185-residue chain is Capsid protein (185 aa).

Positions 136 to 185 (NAPILSTLPETTVVRRRDRGRSPRRRTPSPRRRRSQSPRRRRSQSRESQC) are disordered. Positions 149–178 (VRRRDRGRSPRRRTPSPRRRRSQSPRRRRS) are enriched in basic residues. A phosphoserine; by host mark is found at Ser-157, Ser-164, and Ser-172. One copy of the 1; half-length repeat lies at 157 to 163 (SPRRRTP). A 3 X 8 AA repeats of S-P-R-R-R-[PR]-S-Q region spans residues 157–179 (SPRRRTPSPRRRRSQSPRRRRSQ). Residues 160–177 (RRTPSPRRRRSQSPRRRR) carry the Bipartite nuclear localization signal motif. Tandem repeats lie at residues 164–171 (SPRRRRSQ) and 172–179 (SPRRRRSQ). Residues 179–185 (QSRESQC) are RNA binding.

The protein belongs to the orthohepadnavirus core antigen family. Homodimerizes, then multimerizes. Interacts with cytosol exposed regions of viral L glycoprotein present in the reticulum-to-Golgi compartment. Interacts with human FLNB. Phosphorylated form interacts with host importin alpha; this interaction depends on the exposure of the NLS, which itself depends upon genome maturation and/or phosphorylation of the capsid protein. Interacts with host NUP153. In terms of processing, phosphorylated by host SRPK1, SRPK2, and maybe protein kinase C or GAPDH. Phosphorylation is critical for pregenomic RNA packaging. Protein kinase C phosphorylation is stimulated by HBx protein and may play a role in transport of the viral genome to the nucleus at the late step during the viral replication cycle.

The protein localises to the virion. It is found in the host cytoplasm. Its function is as follows. Self assembles to form an icosahedral capsid. Most capsids appear to be large particles with an icosahedral symmetry of T=4 and consist of 240 copies of capsid protein, though a fraction forms smaller T=3 particles consisting of 180 capsid proteins. Entering capsids are transported along microtubules to the nucleus. Phosphorylation of the capsid is thought to induce exposure of nuclear localization signal in the C-terminal portion of the capsid protein that allows binding to the nuclear pore complex via the importin (karyopherin-) alpha and beta. Capsids are imported in intact form through the nuclear pore into the nuclear basket, where it probably binds NUP153. Only capsids that contain the mature viral genome can release the viral DNA and capsid protein into the nucleoplasm. Immature capsids get stuck in the basket. Capsids encapsulate the pre-genomic RNA and the P protein. Pre-genomic RNA is reverse-transcribed into DNA while the capsid is still in the cytoplasm. The capsid can then either be directed to the nucleus, providing more genomes for transcription, or bud through the endoplasmic reticulum to provide new virions. The polypeptide is Capsid protein (Homo sapiens (Human)).